A 237-amino-acid polypeptide reads, in one-letter code: Ribonuclease 3 (237 aa).

The region spanning 6-133 (LIEVEKLIGI…VIAAVYLDKG (128 aa)) is the RNase III domain. Residue Glu46 coordinates Mg(2+). Asp50 is an active-site residue. Residues Asp119 and Glu122 each coordinate Mg(2+). The active site involves Glu122. Residues 160-229 (DFKTRLQEVL…AKAALQRLGE (70 aa)) form the DRBM domain.

Belongs to the ribonuclease III family. In terms of assembly, homodimer. Requires Mg(2+) as cofactor.

The protein resides in the cytoplasm. The catalysed reaction is Endonucleolytic cleavage to 5'-phosphomonoester.. Digests double-stranded RNA. Involved in the processing of primary rRNA transcript to yield the immediate precursors to the large and small rRNAs (23S and 16S). Processes some mRNAs, and tRNAs when they are encoded in the rRNA operon. Processes pre-crRNA and tracrRNA of type II CRISPR loci if present in the organism. The polypeptide is Ribonuclease 3 (Clostridium perfringens (strain 13 / Type A)).